Reading from the N-terminus, the 505-residue chain is Probable cytosol aminopeptidase (505 aa).

Mn(2+) is bound by residues Lys-269 and Asp-274. Lys-281 is an active-site residue. Residues Asp-292, Asp-351, and Glu-353 each contribute to the Mn(2+) site. Arg-355 is a catalytic residue.

The protein belongs to the peptidase M17 family. Mn(2+) is required as a cofactor.

The protein resides in the cytoplasm. It carries out the reaction Release of an N-terminal amino acid, Xaa-|-Yaa-, in which Xaa is preferably Leu, but may be other amino acids including Pro although not Arg or Lys, and Yaa may be Pro. Amino acid amides and methyl esters are also readily hydrolyzed, but rates on arylamides are exceedingly low.. It catalyses the reaction Release of an N-terminal amino acid, preferentially leucine, but not glutamic or aspartic acids.. In terms of biological role, presumably involved in the processing and regular turnover of intracellular proteins. Catalyzes the removal of unsubstituted N-terminal amino acids from various peptides. The chain is Probable cytosol aminopeptidase from Rhodococcus jostii (strain RHA1).